We begin with the raw amino-acid sequence, 722 residues long: Peroxisomal bifunctional enzyme (722 aa).

The interval 1 to 281 (MAEYLRLPHS…FAEKSANKWS (281 aa)) is enoyl-CoA hydratase / isomerase. Residue Ala2 is modified to Blocked amino end (Ala). N6-succinyllysine is present on Lys38. Gly100 contacts substrate. Lys173 bears the N6-acetyllysine; alternate mark. Lys173 is modified (N6-succinyllysine; alternate). Lys182 is modified (N6-succinyllysine). Residues Lys190 and Lys218 each carry the N6-acetyllysine; alternate modification. An N6-succinyllysine; alternate mark is found at Lys190 and Lys218. The residue at position 241 (Lys241) is an N6-succinyllysine. The residue at position 249 (Lys249) is an N6-acetyllysine. Lys253 bears the N6-succinyllysine mark. Position 275 is an N6-acetyllysine; alternate (Lys275). At Lys275 the chain carries N6-succinyllysine; alternate. N6-succinyllysine is present on residues Lys279, Lys289, and Lys330. A 3-hydroxyacyl-CoA dehydrogenase region spans residues 282–571 (TPSGASWKTA…DMLCEAGRFG (290 aa)). Lys345, Lys359, and Lys463 each carry N6-acetyllysine. The residue at position 531 (Lys531) is an N6-succinyllysine. Thr547 carries the phosphothreonine modification. The residue at position 576 (Lys576) is an N6-succinyllysine. N6-acetyllysine; alternate occurs at positions 583, 590, and 709. An N6-succinyllysine; alternate mark is found at Lys583, Lys590, and Lys709. Residues 720-722 (SKL) carry the Microbody targeting signal motif. Residue Lys721 is modified to N6-succinyllysine.

In the N-terminal section; belongs to the enoyl-CoA hydratase/isomerase family. The protein in the C-terminal section; belongs to the 3-hydroxyacyl-CoA dehydrogenase family. In terms of assembly, monomer. In terms of processing, acetylated, leading to enhanced enzyme activity. Acetylation is enhanced by up to 80% after treatment either with trichostin A (TCA) or with nicotinamide (NAM) with highest increase on Lys-345. Acetylation and enzyme activity increased by about 1.5% on addition of fatty acids.

Its subcellular location is the peroxisome. It catalyses the reaction a (3S)-3-hydroxyacyl-CoA = a (2E)-enoyl-CoA + H2O. The catalysed reaction is a 4-saturated-(3S)-3-hydroxyacyl-CoA = a (3E)-enoyl-CoA + H2O. It carries out the reaction a (3Z)-enoyl-CoA = a 4-saturated (2E)-enoyl-CoA. The enzyme catalyses a (3E)-enoyl-CoA = a 4-saturated (2E)-enoyl-CoA. It catalyses the reaction a (3S)-3-hydroxyacyl-CoA + NAD(+) = a 3-oxoacyl-CoA + NADH + H(+). The catalysed reaction is (2S,3S)-3-hydroxy-2-methylbutanoyl-CoA = (2E)-2-methylbut-2-enoyl-CoA + H2O. It carries out the reaction (3E,5Z)-tetradecadienoyl-CoA = (2E,5Z)-tetradecadienoyl-CoA. The enzyme catalyses (3E,5Z)-octadienoyl-CoA = (2E,5Z)-octadienoyl-CoA. It catalyses the reaction (3S)-hydroxydecanoyl-CoA + NAD(+) = 3-oxodecanoyl-CoA + NADH + H(+). The catalysed reaction is (3E)-decenoyl-CoA = (2E)-decenoyl-CoA. It carries out the reaction (3Z)-hexenoyl-CoA = (2E)-hexenoyl-CoA. The enzyme catalyses (3E)-hexenoyl-CoA = (2E)-hexenoyl-CoA. It catalyses the reaction (3S)-hydroxydecanoyl-CoA = (2E)-decenoyl-CoA + H2O. The catalysed reaction is (3S)-hydroxyhexanoyl-CoA = (2E)-hexenoyl-CoA + H2O. It carries out the reaction (3S)-hydroxyhexadecanoyl-CoA + NAD(+) = 3-oxohexadecanoyl-CoA + NADH + H(+). The enzyme catalyses (3S)-hydroxyhexadecanoyl-CoA = (2E)-hexadecenoyl-CoA + H2O. It catalyses the reaction (2E)-hexadecenedioyl-CoA + H2O = (3S)-hydroxyhexadecanedioyl-CoA. The catalysed reaction is (3S)-hydroxyhexadecanedioyl-CoA + NAD(+) = 3-oxohexadecanedioyl-CoA + NADH + H(+). It functions in the pathway lipid metabolism; fatty acid beta-oxidation. Its activity is regulated as follows. Enzyme activity enhanced by acetylation. Peroxisomal trifunctional enzyme possessing 2-enoyl-CoA hydratase, 3-hydroxyacyl-CoA dehydrogenase, and delta 3, delta 2-enoyl-CoA isomerase activities. Catalyzes two of the four reactions of the long chain fatty acids peroxisomal beta-oxidation pathway. Can also use branched-chain fatty acids such as 2-methyl-2E-butenoyl-CoA as a substrate, which is hydrated into (2S,3S)-3-hydroxy-2-methylbutanoyl-CoA. Optimal isomerase for 2,5 double bonds into 3,5 form isomerization in a range of enoyl-CoA species. Also able to isomerize both 3-cis and 3-trans double bonds into the 2-trans form in a range of enoyl-CoA species. Regulates the amount of medium-chain dicarboxylic fatty acids which are essential regulators of all fatty acid oxidation pathways. Also involved in the degradation of long-chain dicarboxylic acids through peroxisomal beta-oxidation. In Rattus norvegicus (Rat), this protein is Peroxisomal bifunctional enzyme.